The chain runs to 160 residues: Cyanate hydratase (160 aa).

Catalysis depends on residues arginine 100, glutamate 103, and serine 126.

Belongs to the cyanase family.

It carries out the reaction cyanate + hydrogencarbonate + 3 H(+) = NH4(+) + 2 CO2. Functionally, catalyzes the reaction of cyanate with bicarbonate to produce ammonia and carbon dioxide. In Aspergillus flavus (strain ATCC 200026 / FGSC A1120 / IAM 13836 / NRRL 3357 / JCM 12722 / SRRC 167), this protein is Cyanate hydratase.